A 541-amino-acid polypeptide reads, in one-letter code: Glucose-6-phosphate isomerase (541 aa).

Residue glutamate 346 is the Proton donor of the active site. Residues histidine 377 and lysine 506 contribute to the active site.

The protein belongs to the GPI family.

The protein localises to the cytoplasm. The catalysed reaction is alpha-D-glucose 6-phosphate = beta-D-fructose 6-phosphate. Its pathway is carbohydrate biosynthesis; gluconeogenesis. It functions in the pathway carbohydrate degradation; glycolysis; D-glyceraldehyde 3-phosphate and glycerone phosphate from D-glucose: step 2/4. In terms of biological role, catalyzes the reversible isomerization of glucose-6-phosphate to fructose-6-phosphate. The polypeptide is Glucose-6-phosphate isomerase (Sinorhizobium medicae (strain WSM419) (Ensifer medicae)).